Consider the following 227-residue polypeptide: 2,3-bisphosphoglycerate-dependent phosphoglycerate mutase (227 aa).

Residues 7–14 (RHGFSEWN), 20–21 (TG), R59, 86–89 (ERHY), K97, 113–114 (RR), and 182–183 (GN) each bind substrate. H8 functions as the Tele-phosphohistidine intermediate in the catalytic mechanism. The Proton donor/acceptor role is filled by E86.

Belongs to the phosphoglycerate mutase family. BPG-dependent PGAM subfamily. In terms of assembly, homodimer.

It catalyses the reaction (2R)-2-phosphoglycerate = (2R)-3-phosphoglycerate. The protein operates within carbohydrate degradation; glycolysis; pyruvate from D-glyceraldehyde 3-phosphate: step 3/5. Its function is as follows. Catalyzes the interconversion of 2-phosphoglycerate and 3-phosphoglycerate. The polypeptide is 2,3-bisphosphoglycerate-dependent phosphoglycerate mutase (Haemophilus ducreyi (strain 35000HP / ATCC 700724)).